The sequence spans 484 residues: Transcription factor MYB88 (484 aa).

The disordered stretch occupies residues 1-20 (MEETTKQNNMKKKKKILLHS). The Nuclear localization signal signature appears at 13-20 (KKKILLHS). HTH myb-type domains follow at residues 25-76 (KKER…YTYL) and 77-131 (NSDF…KKRA). 2 DNA-binding regions (H-T-H motif) span residues 53-76 (WAII…YTYL) and 104-127 (WTEI…TTLC). 3 disordered regions span residues 215-241 (NATS…DKSN), 321-383 (RSSN…GGEL), and 458-484 (GVES…LDSL). Basic and acidic residues predominate over residues 232-241 (KESDGEDKSN). Residues 339-348 (SPASSEYSSG) are compositionally biased toward low complexity. Over residues 354–380 (TIMTHPSGDKTQQLMSDTQTTSHQQNG) the composition is skewed to polar residues. Pro residues predominate over residues 463 to 476 (SPYPSANPSQPPPC).

As to quaternary structure, interacts with RBR1. As to expression, expressed at low levels in all organs including roots, leaves, hypocotyls stems, flowers, siliques and buds.

It localises to the nucleus. Functionally, transcription factor that binds to DNA in promoters cis-regulatory element 5'-GGCGCGC-3' of cell cycle genes, including cyclins, cyclin-dependent kinases (CDKs), and components of the pre-replication complex. Binds to DNA in promoters cis-regulatory element 5'-AGCCG-3' of auxin regulated genes (e.g. PIN3 and PIN7). Together with FAMA and MYB124, ensures that stomata contain just two guard cells (GCs) by enforcing a single symmetric precursor cell division before stomatal maturity. Represses the expression of the mitosis-inducing factors CDKB1-1 and CDKA-1, specifically required for the last guard mother cells (GMC) symmetric divisions in the stomatal pathway. Represses CYCA2-3 in newly formed guard cells. Together with MYB88, regulates stomata spacing by restricting divisions late in the stomatal cell lineage thus limiting the number of GMC divisions. In collaboration with CDKB1-1 and CDKB1-2, restrict the G1/S transition and chloroplast and nuclear number during stomatal formation, and normally maintain fate and developmental progression throughout the stomatal cell lineage. Involved in sensing and/or transducing abiotic stress (e.g. drought and salt), probably via the positive regulation of NAC019. Regulates female reproduction being required for entry into megasporogenesis, probably via the regulation of cell cycle genes. Plays a minor role in lateral roots (LRs) initiation. Involved complementarily in establishing the gravitropic set-point angles of lateral roots by regulating the transcription of PIN3 and PIN7 in gravity-sensing cells of primary and lateral roots. This Arabidopsis thaliana (Mouse-ear cress) protein is Transcription factor MYB88.